The chain runs to 572 residues: Urease subunit alpha (572 aa).

A Urease domain is found at 136–572 (GGIDTHIHWI…VPLAQRYFLF (437 aa)). Residues His-141, His-143, and Lys-224 each coordinate Ni(2+). Lys-224 carries the N6-carboxylysine modification. His-226 serves as a coordination point for substrate. Ni(2+) contacts are provided by His-253 and His-279. The active-site Proton donor is the His-327. Position 367 (Asp-367) interacts with Ni(2+).

It belongs to the metallo-dependent hydrolases superfamily. Urease alpha subunit family. Heterotrimer of UreA (gamma), UreB (beta) and UreC (alpha) subunits. Three heterotrimers associate to form the active enzyme. Ni cation serves as cofactor. Carboxylation allows a single lysine to coordinate two nickel ions.

The protein localises to the cytoplasm. The enzyme catalyses urea + 2 H2O + H(+) = hydrogencarbonate + 2 NH4(+). Its pathway is nitrogen metabolism; urea degradation; CO(2) and NH(3) from urea (urease route): step 1/1. In Actinobacillus pleuropneumoniae serotype 5b (strain L20), this protein is Urease subunit alpha.